We begin with the raw amino-acid sequence, 207 residues long: 8-oxoguanine DNA glycosylase/AP lyase (207 aa).

Active-site residues include Lys-129 and Asp-147.

Belongs to the type-2 OGG1 family.

The catalysed reaction is 2'-deoxyribonucleotide-(2'-deoxyribose 5'-phosphate)-2'-deoxyribonucleotide-DNA = a 3'-end 2'-deoxyribonucleotide-(2,3-dehydro-2,3-deoxyribose 5'-phosphate)-DNA + a 5'-end 5'-phospho-2'-deoxyribonucleoside-DNA + H(+). In terms of biological role, catalyzes the excision of an oxidatively damaged form of guanine (7,8-dihydro-8-oxoguanine = 8-oxoG) from DNA. Also cleaves the DNA backbone at apurinic/apyrimidinic sites (AP sites). Has little specificity for the base opposite oxoG. The chain is 8-oxoguanine DNA glycosylase/AP lyase from Methanocaldococcus jannaschii (strain ATCC 43067 / DSM 2661 / JAL-1 / JCM 10045 / NBRC 100440) (Methanococcus jannaschii).